A 307-amino-acid chain; its full sequence is Recombination-associated protein RdgC (307 aa).

Belongs to the RdgC family.

Its subcellular location is the cytoplasm. It localises to the nucleoid. Its function is as follows. May be involved in recombination. This chain is Recombination-associated protein RdgC, found in Burkholderia orbicola (strain MC0-3).